The chain runs to 644 residues: Exoribonuclease 2 (644 aa).

An RNB domain is found at 189 to 516 (REDLTALDFV…NHRLLKAIIK (328 aa)). The 83-residue stretch at 561–643 (DSRFAAEIID…ETRSVIARPV (83 aa)) folds into the S1 motif domain.

This sequence belongs to the RNR ribonuclease family. RNase II subfamily.

It localises to the cytoplasm. It catalyses the reaction Exonucleolytic cleavage in the 3'- to 5'-direction to yield nucleoside 5'-phosphates.. Involved in mRNA degradation. Hydrolyzes single-stranded polyribonucleotides processively in the 3' to 5' direction. In Cronobacter sakazakii (strain ATCC BAA-894) (Enterobacter sakazakii), this protein is Exoribonuclease 2.